Here is a 424-residue protein sequence, read N- to C-terminus: Arogenate dehydratase 3, chloroplastic (424 aa).

The transit peptide at 1–24 directs the protein to the chloroplast; it reads MRTLLPSHTPATVTTAARRRHVIH. Residues 57 to 71 are compositionally biased toward low complexity; it reads EQSESLSSNSNGSSS. The disordered stretch occupies residues 57–77; that stretch reads EQSESLSSNSNGSSSYHVSAV. The Prephenate dehydratase domain occupies 122–299; the sequence is RVAYQGVPGA…NVTRFVMLAR (178 aa). The 92-residue stretch at 313–404 folds into the ACT domain; that stretch reads SIVFAHEKGT…SFLRVLGSYP (92 aa).

May interact with GPA1. In terms of tissue distribution, expressed in roots, leaves, stems, flowers and siliques.

It is found in the plastid. The protein resides in the chloroplast stroma. It catalyses the reaction L-arogenate + H(+) = L-phenylalanine + CO2 + H2O. It participates in amino-acid biosynthesis; L-phenylalanine biosynthesis; L-phenylalanine from L-arogenate: step 1/1. Functionally, converts the prephenate produced from the shikimate-chorismate pathway into phenylalanine. Together with GCR1 and GPA1, required for blue light-mediated synthesis of phenylpyruvate and subsequently of phenylalanine (Phe), in etiolated seedlings. This chain is Arogenate dehydratase 3, chloroplastic, found in Arabidopsis thaliana (Mouse-ear cress).